A 142-amino-acid polypeptide reads, in one-letter code: Transcriptional regulator MraZ (142 aa).

2 SpoVT-AbrB domains span residues 5 to 51 and 77 to 120; these read ASSL…PRPE and AMDV…DKAS.

Belongs to the MraZ family. In terms of assembly, forms oligomers.

The protein localises to the cytoplasm. It localises to the nucleoid. The chain is Transcriptional regulator MraZ from Verminephrobacter eiseniae (strain EF01-2).